Here is a 394-residue protein sequence, read N- to C-terminus: Probable glycosyltransferase FCK3 (394 aa).

This sequence belongs to the afumC glycosyltransferase family.

The protein operates within secondary metabolite biosynthesis. Functionally, probable glycosyl transferase; part of the gene cluster that mediates the biosynthesis of cytokinins such as fusatin, fusatinic acids or 8-oxofusatin, known for their growth promoting and anti-senescence activities toward host plants. FCK1 is a bifunctional enzyme that performs the first steps in the biosynthesis of Fusarium cytokinins. It first condenses adenosine monophosphate (AMP) with dimethylallyl diphosphate (DMAPP) to yield isoprenyl adenosine monophosphate. It then catalyzes the removal of the phosphoribose to produce isopentenylaldehyde. The cytochrome P450 monooxygenase then converts isopentenylaldehyde to trans-zeatin. A condensation step converts trans-zeatin to fusatin which is further modified to produce fusatinic acid. The mechanism for oxidation of fusatin to fusatinic acid remains unknown. 8-oxofusatin could be produced through several pathways, via direct oxygenation of fusatin, or via the 8-oxo-pentenyladenine intermediate which itself must arise from either the prenylation of 8-oxo-AMP by FCK1 and/or oxygenation of isopentenylaldehyde. Both the FCK3 and FCK4 enzymes act downstream of the identified cytokinins to produce yet unidentified compounds. The polypeptide is Probable glycosyltransferase FCK3 (Fusarium pseudograminearum (strain CS3096) (Wheat and barley crown-rot fungus)).